A 424-amino-acid polypeptide reads, in one-letter code: MEFKQGDWVRIERNGTVYEGKVMPSMEGYITIKMKSGYNAGFSIDKVRITLLENNGETANGSRNGGKGCKTNEEELPEPGKKLPKIAILSTGGTIASKIDYRTGAVTSQFTADDILAAIPELKEIADFKGRVISSILSENMDSDSWQNLSKAVVEEIEAGADGVIVTHGTDTMMYSAAALSFMIKTPVPIVFVGSQRSADRPSSDNAMNAICAARVAISDIAEVVVVMHGTTSDDFCEIHRGTKVRKLHTSRRDAFKSVNSLPVGTVDYGTGEIKTFIDYTRRGEKALKFKPGMEPKCALVKFTPGADPTVLDYYISNGYKGLVVEGTGLGHISTKWIPLLRKATDAKMPVIVTSQCLNGRICDRVYDTGRDMLKAGAIEGEDTLPETALVKLMWVLGQTDDFEKAAGMLREDLSGEITECTQR.

Positions Gly-56–Glu-78 are disordered. The Asparaginase/glutaminase domain maps to Pro-84–Asp-413. Residues Thr-94, Thr-170, Asp-171, and Lys-247 contribute to the active site.

Belongs to the asparaginase 1 family. GatD subfamily. In terms of assembly, heterodimer of GatD and GatE.

It carries out the reaction L-glutamyl-tRNA(Gln) + L-glutamine + ATP + H2O = L-glutaminyl-tRNA(Gln) + L-glutamate + ADP + phosphate + H(+). Allows the formation of correctly charged Gln-tRNA(Gln) through the transamidation of misacylated Glu-tRNA(Gln) in organisms which lack glutaminyl-tRNA synthetase. The reaction takes place in the presence of glutamine and ATP through an activated gamma-phospho-Glu-tRNA(Gln). The GatDE system is specific for glutamate and does not act on aspartate. The polypeptide is Glutamyl-tRNA(Gln) amidotransferase subunit D (Methanosarcina acetivorans (strain ATCC 35395 / DSM 2834 / JCM 12185 / C2A)).